The sequence spans 54 residues: Ribulose bisphosphate carboxylase large chain (54 aa).

Positions 1 to 2 (MS) are excised as a propeptide. Position 3 is an N-acetylproline (P3). K14 carries the post-translational modification N6,N6,N6-trimethyllysine.

The protein belongs to the RuBisCO large chain family. Type I subfamily. As to quaternary structure, heterohexadecamer of 8 large chains and 8 small chains.

The protein localises to the plastid. It localises to the chloroplast. It carries out the reaction 2 (2R)-3-phosphoglycerate + 2 H(+) = D-ribulose 1,5-bisphosphate + CO2 + H2O. It catalyses the reaction D-ribulose 1,5-bisphosphate + O2 = 2-phosphoglycolate + (2R)-3-phosphoglycerate + 2 H(+). In terms of biological role, ruBisCO catalyzes two reactions: the carboxylation of D-ribulose 1,5-bisphosphate, the primary event in carbon dioxide fixation, as well as the oxidative fragmentation of the pentose substrate in the photorespiration process. Both reactions occur simultaneously and in competition at the same active site. This chain is Ribulose bisphosphate carboxylase large chain (rbcL), found in Ilex aquifolium (English holly).